The primary structure comprises 274 residues: PTS system sorbose-specific EIID component (274 aa).

Positions 4–273 (KKITQGDLVS…GIIGNALGFL (270 aa)) constitute a PTS EIID domain. A run of 6 helical transmembrane segments spans residues 61–81 (LVFF…TAAM), 99–119 (IKVG…WGTL), 126–146 (LGAS…FFIF), 186–206 (ILGL…NVPL), 226–246 (ILDQ…MVRL), and 253–273 (PVWL…LGFL).

The protein resides in the cell inner membrane. Functionally, the phosphoenolpyruvate-dependent sugar phosphotransferase system (PTS), a major carbohydrate active transport system, catalyzes the phosphorylation of incoming sugar substrates concomitant with their translocation across the cell membrane. The enzyme II SorABFM PTS system is involved in sorbose transport. This is PTS system sorbose-specific EIID component from Klebsiella pneumoniae.